The chain runs to 1229 residues: ABC transporter B family member 3 (1229 aa).

Residues 22 to 42 (VLLMIVGSIGAIGNGVGFPLM) traverse the membrane as a helical segment. The region spanning 25 to 313 (MIVGSIGAIG…TTPCLTAFAA (289 aa)) is the ABC transmembrane type-1 1 domain. The N-linked (GlcNAc...) asparagine glycan is linked to N56. 5 helical membrane-spanning segments follow: residues 73 to 93 (FVYL…CWMI), 149 to 169 (FIQL…KGWL), 172 to 192 (LVML…PIIV), 252 to 272 (GLGL…AIWF), and 281 to 301 (GYTG…SMSL). One can recognise an ABC transporter 1 domain in the interval 348–584 (IELRDVCFSY…HEGAYAQLIR (237 aa)). Position 383 to 390 (383 to 390 (GESGSGKS)) interacts with ATP. The N-linked (GlcNAc...) asparagine glycan is linked to N450. Basic and acidic residues predominate over residues 594–606 (RLESSNELRDRSI). Residues 594–614 (RLESSNELRDRSINRGSSRNI) form a disordered region. The N-linked (GlcNAc...) asparagine glycan is linked to N645. The next 2 helical transmembrane spans lie at 661-681 (ILIL…IFGI) and 706-726 (MIFV…TYLF). The region spanning 662–949 (LILGTLLGAV…ASSFAPDSSK (288 aa)) is the ABC transmembrane type-1 2 domain. N758 carries N-linked (GlcNAc...) asparagine glycosylation. The next 3 helical transmembrane spans lie at 797–817 (IIAF…IPLI), 888–908 (GVGF…CFYV), and 923–943 (VFQV…ASSF). The ABC transporter 2 domain maps to 984–1222 (IELCHISFTY…EGGVYASLVQ (239 aa)). An ATP-binding site is contributed by 1019–1026 (GESGSGKS). N-linked (GlcNAc...) asparagine glycans are attached at residues N1073 and N1173.

It belongs to the ABC transporter superfamily. ABCB family. Multidrug resistance exporter (TC 3.A.1.201) subfamily.

The protein resides in the membrane. In Arabidopsis thaliana (Mouse-ear cress), this protein is ABC transporter B family member 3 (ABCB3).